The following is a 345-amino-acid chain: uncharacterized protein (345 aa).

The span at 1 to 13 shows a compositional bias: polar residues; the sequence is MSKPNTETISVNI. The disordered stretch occupies residues 1–23; the sequence is MSKPNTETISVNIPESEGVPLPD. Residues 283-316 are a coiled coil; sequence SLKQRTNILKKQGETLKKNVEDINKDTSNLKRHA.

The protein localises to the virion. This is an uncharacterized protein from Acanthamoeba polyphaga mimivirus (APMV).